Here is a 298-residue protein sequence, read N- to C-terminus: GTP cyclohydrolase FolE2 (298 aa).

The protein belongs to the GTP cyclohydrolase IV family.

It carries out the reaction GTP + H2O = 7,8-dihydroneopterin 3'-triphosphate + formate + H(+). It participates in cofactor biosynthesis; 7,8-dihydroneopterin triphosphate biosynthesis; 7,8-dihydroneopterin triphosphate from GTP: step 1/1. Functionally, converts GTP to 7,8-dihydroneopterin triphosphate. This Pseudomonas aeruginosa (strain LESB58) protein is GTP cyclohydrolase FolE2.